A 393-amino-acid polypeptide reads, in one-letter code: Phospho-N-acetylmuramoyl-pentapeptide-transferase (393 aa).

10 consecutive transmembrane segments (helical) span residues 29–49 (RAVM…PIVI), 75–95 (TPTM…LLWF), 101–121 (FVWI…VDDW), 138–158 (YFWQ…SVSE), 193–213 (SISY…VIVG), 226–246 (GLAI…AYAT), 263–283 (AGEL…FLWF), 290–310 (VFMG…IAVI), 315–335 (VVLA…MAQV), and 370–390 (QVVV…LSSL).

The protein belongs to the glycosyltransferase 4 family. MraY subfamily. The cofactor is Mg(2+).

It is found in the cell inner membrane. It catalyses the reaction UDP-N-acetyl-alpha-D-muramoyl-L-alanyl-gamma-D-glutamyl-meso-2,6-diaminopimeloyl-D-alanyl-D-alanine + di-trans,octa-cis-undecaprenyl phosphate = di-trans,octa-cis-undecaprenyl diphospho-N-acetyl-alpha-D-muramoyl-L-alanyl-D-glutamyl-meso-2,6-diaminopimeloyl-D-alanyl-D-alanine + UMP. The protein operates within cell wall biogenesis; peptidoglycan biosynthesis. Catalyzes the initial step of the lipid cycle reactions in the biosynthesis of the cell wall peptidoglycan: transfers peptidoglycan precursor phospho-MurNAc-pentapeptide from UDP-MurNAc-pentapeptide onto the lipid carrier undecaprenyl phosphate, yielding undecaprenyl-pyrophosphoryl-MurNAc-pentapeptide, known as lipid I. The polypeptide is Phospho-N-acetylmuramoyl-pentapeptide-transferase (Methylibium petroleiphilum (strain ATCC BAA-1232 / LMG 22953 / PM1)).